Here is a 218-residue protein sequence, read N- to C-terminus: Cytidylate kinase (218 aa).

7 to 15 (GPSASGKSS) contributes to the ATP binding site.

This sequence belongs to the cytidylate kinase family. Type 1 subfamily.

The protein resides in the cytoplasm. The catalysed reaction is CMP + ATP = CDP + ADP. It catalyses the reaction dCMP + ATP = dCDP + ADP. In Borrelia hermsii (strain HS1 / DAH), this protein is Cytidylate kinase.